Here is an 83-residue protein sequence, read N- to C-terminus: Large ribosomal subunit protein bL31B (83 aa).

Belongs to the bacterial ribosomal protein bL31 family. Type B subfamily. As to quaternary structure, part of the 50S ribosomal subunit.

The protein is Large ribosomal subunit protein bL31B of Bacteroides fragilis (strain ATCC 25285 / DSM 2151 / CCUG 4856 / JCM 11019 / LMG 10263 / NCTC 9343 / Onslow / VPI 2553 / EN-2).